Here is a 360-residue protein sequence, read N- to C-terminus: Protein MGF 360-1L (360 aa).

It belongs to the asfivirus MGF 360 family.

Plays a role in virus cell tropism, and may be required for efficient virus replication in macrophages. The chain is Protein MGF 360-1L from African swine fever virus (strain Badajoz 1971 Vero-adapted) (Ba71V).